The sequence spans 89 residues: Small ribosomal subunit protein uS15 (89 aa).

Belongs to the universal ribosomal protein uS15 family. In terms of assembly, part of the 30S ribosomal subunit. Forms a bridge to the 50S subunit in the 70S ribosome, contacting the 23S rRNA.

Its function is as follows. One of the primary rRNA binding proteins, it binds directly to 16S rRNA where it helps nucleate assembly of the platform of the 30S subunit by binding and bridging several RNA helices of the 16S rRNA. Functionally, forms an intersubunit bridge (bridge B4) with the 23S rRNA of the 50S subunit in the ribosome. The protein is Small ribosomal subunit protein uS15 of Shewanella woodyi (strain ATCC 51908 / MS32).